Here is a 100-residue protein sequence, read N- to C-terminus: Small ribosomal subunit protein uS14c (100 aa).

It belongs to the universal ribosomal protein uS14 family. As to quaternary structure, part of the 30S ribosomal subunit.

Its subcellular location is the plastid. It is found in the chloroplast. Functionally, binds 16S rRNA, required for the assembly of 30S particles. This is Small ribosomal subunit protein uS14c from Euglena gracilis.